Consider the following 564-residue polypeptide: Septation ring formation regulator EzrA (564 aa).

At 1–4 (MVLF) the chain is on the extracellular side. Residues 5 to 23 (IILAILVVILIAIGVLFYM) form a helical membrane-spanning segment. Residues 24-564 (RSNKRNLIEK…KHIEEQVIKE (541 aa)) lie on the Cytoplasmic side of the membrane. Coiled coils occupy residues 84–126 (VEEK…HQVT), 165–223 (EAAE…LIRE), 271–303 (MISR…YEVK), and 350–435 (VRQF…RRLL).

The protein belongs to the EzrA family.

Its subcellular location is the cell membrane. Negative regulator of FtsZ ring formation; modulates the frequency and position of FtsZ ring formation. Inhibits FtsZ ring formation at polar sites. Interacts either with FtsZ or with one of its binding partners to promote depolymerization. This is Septation ring formation regulator EzrA from Staphylococcus epidermidis (strain ATCC 12228 / FDA PCI 1200).